The chain runs to 240 residues: Uridylate kinase (240 aa).

Residue 13–16 (KASG) participates in ATP binding. The involved in allosteric activation by GTP stretch occupies residues 21–26 (GSQGFG). G55 lines the UMP pocket. Residues G56 and R60 each contribute to the ATP site. UMP-binding positions include D75 and 136–143 (TGNPFFTT). The ATP site is built by T163, Q164, Y169, and D172.

It belongs to the UMP kinase family. In terms of assembly, homohexamer.

The protein resides in the cytoplasm. The enzyme catalyses UMP + ATP = UDP + ADP. Its pathway is pyrimidine metabolism; CTP biosynthesis via de novo pathway; UDP from UMP (UMPK route): step 1/1. With respect to regulation, allosterically activated by GTP. Inhibited by UTP. Its function is as follows. Catalyzes the reversible phosphorylation of UMP to UDP. This Brucella melitensis biotype 1 (strain ATCC 23456 / CCUG 17765 / NCTC 10094 / 16M) protein is Uridylate kinase.